The sequence spans 457 residues: Zinc finger protein ZIPIC (457 aa).

One can recognise a ZAD domain in the interval 3 to 84 (CCICQFSVRV…ILELIHSPYM (82 aa)). 6 consecutive C2H2-type zinc fingers follow at residues 257–280 (IQCP…KREH), 284–306 (YVCD…LQNH), 312–334 (FACP…MAWH), 340–362 (YQCD…KMIH), 369–391 (LECQ…MRSH), and 397–419 (FACP…LREH). The segment at 430–448 (FHCSKCTHTFINEQNYDAH) adopts a C2H2-type 7; degenerate zinc-finger fold.

In terms of assembly, interacts (via region between the ZAD domain and the first zinc finger domain) with Cp190 (via centrosomal targeting M domain); the interaction is direct. Interacts with pita.

It localises to the nucleus. It is found in the chromosome. In terms of biological role, insulator DNA-binding protein. Recruits Cp190 and cooperatively binds to chromatin promoter regions to exert transcriptional regulator and chromatin insulator functions. Chromatin insulators are regulatory elements that establish independent domains of transcriptional activity within eukaryotic genomes. Insulators are proposed to structure the chromatin fiber into independent domains of differing transcriptional potential by promoting the formation of distinct chromatin loops to form topologically associating domains (TADs). Chromatin binding sites often cluster with those of other insulator DNA-binding proteins such as pita, CTCF and BEAF-32, but not Su(Hw). The chain is Zinc finger protein ZIPIC from Drosophila melanogaster (Fruit fly).